The sequence spans 397 residues: Na(+)/H(+) antiporter NhaA 3 (397 aa).

The next 11 helical transmembrane spans lie at 18–38 (AGGI…NSPF), 63–83 (LLLW…GLEL), 98–118 (IALP…IYWW), 129–149 (GWAI…ALLG), 158–178 (IFLT…IAFF), 181–201 (SKIS…LFIC), 207–224 (TTLR…VALL), 269–289 (VAFL…FIGM), 306–326 (LFFG…LFGW), 340–360 (GVAV…SLAF), and 373–393 (LGIV…LRSA).

Belongs to the NhaA Na(+)/H(+) (TC 2.A.33) antiporter family.

The protein localises to the cell inner membrane. It carries out the reaction Na(+)(in) + 2 H(+)(out) = Na(+)(out) + 2 H(+)(in). Functionally, na(+)/H(+) antiporter that extrudes sodium in exchange for external protons. In Saccharophagus degradans (strain 2-40 / ATCC 43961 / DSM 17024), this protein is Na(+)/H(+) antiporter NhaA 3.